A 1596-amino-acid chain; its full sequence is MPLLFFALAGCDGSPLCGGLSQRNQFVRLACSVTNFQSSAMFEGSESANTQEVKSESTLGSSLSACKKVLCSNSVLDSSEYWLKNDKTLCRIGFLEDQHDSGCPTICFVNLDRHTSDWHDDNYIKKLASVCPELPRLIESLGVRQPKENEILLLSSLEPPDSCQHDPSHPQSPRTADVCLVHCSCGRRPTQTSSIIFEINKFLIGLQSGQERQKHGRLAGQRAAEDDTNRSVSSIEEDFLTASEQLGEDSEEDPFRNDPENSLMPESVKVLRAAHAQKRSEIEREDSEDSETLCTSSNSQKLSRTYSAPARGRPTTPKQVKESAGHYATNLAESVLQDAFIRLSQDEPSFVAEAAVSVSSDISHSTEAPQRARACSFELPKIVIVQSPDNSEEVTEWPEVQSHATSEHDSGNKAKAKHGTHPPHNSPVGHPAKPLEIALACAASVIGTITTPQVTEQLTLESGEEYECEDEEEESETDQGEYSFSSAVCGMSQVAGAVAAVDLADDSGDNEDLADMYSASMGLLSVAQASTAIPLHCSIAEGTSVEAFRANVAEVLLREASAVFTHRQSYSSVANFLETTHNKIVDGITNPRRPYQEQQDVDNFTQEISDSIFQYALEKAEKRKELEGPGKDAPNIEGFLSDCVNNLLFDVLCVTSRKISDISNCNMESCDGQEGSVGYRAYEADSKAGREALSQLQHLIEPSQAYNHGERRSSVEKLSALIGKREREQKHIQEERENEARLKEPYRLALNRVTATMVKEQSDLQGQLGRSDKNADSALPSAESSPLHMQRGRAGGESETRQQSLSSSSGALVALKMDSGESKTPVTCFAEDLATTVVSMATELAAICLENSSGKQPWFCALNGGSEGPEGLLLPCRTAAALRRKETQNGTSVTKKHRPPRLSEIKRKTEEQPELMERLVNRVVDETVNLDEPTTTDPFALFASEVTARIMNCPELSVVDTSKSGQSSRSRLQCERWSSRGKASSYESIPEEDADPSGTSNTLGPGNRLGHNLSRGSSISKQSSCESITDEFSRFMVNQMETEGRGFDLLLDYYAGKNASSILAAAVQQAASKKNGHLNVRTSSCLSKQSSTESITEEFYRFMLKDMDKENKDYSMTKTKEWSNSLLPPSPRTPFCIRQSSVPDRRSSDSRLTVNSPIKANSFDGFAQNVHGDSLNIYPTNSVSSSGLCKSDSCLYKRGQTDQITDMLIHETWSSSIESLMRKNKIIAEPSEDSLELDSADSQPHVQQFANRLAADIVESGKSQLGGQQDVTAAACQPHIPVGERRHGFKHSRCNNSGNRPGVEHQENSCSSYSSSCVRQAWRGQREVPLIHIEPDQREEASEEKGGVETHHREASHQTQQQSGKGSETATKSSSDSDRVSSVATVPPAGVEVERRSLSASSEESGSGSWAQIATEDDPQEETTSSFIQLSEGNGNSSTSSLGLADLEGFPDFSISSNLISEERERKTSHCQDQADVTLVVLSEVTSGLSTAGSSCQRELLVLNCDLEPDCVDGELRAALQWISASELGVPALYFRKTHQHNLTKLHRVLQLAGQKAWRVGDLFSAVAQFCQLHQDLELKGRPLPSLFDWILKTKR.

Disordered stretches follow at residues 214–233 (KHGR…RSVS), 242–319 (ASEQ…TPKQ), 389–432 (DNSE…GHPA), 462–481 (SGEE…DQGE), and 760–809 (EQSD…SSSS). The span at 292–306 (TLCTSSNSQKLSRTY) shows a compositional bias: polar residues. A compositionally biased stretch (acidic residues) spans 462–479 (SGEEYECEDEEEESETDQ). The segment at 829–846 (FAEDLATTVVSMATELAA) is PKA-RII subunit binding domain. Disordered stretches follow at residues 958–1022 (VVDT…ISKQ), 1282–1310 (VGER…ENSC), and 1328–1443 (VPLI…SSLG). The span at 959 to 971 (VDTSKSGQSSRSR) shows a compositional bias: polar residues. Residues 1333–1356 (IEPDQREEASEEKGGVETHHREAS) are compositionally biased toward basic and acidic residues. Residues 1357 to 1372 (HQTQQQSGKGSETATK) show a composition bias toward polar residues. Composition is skewed to low complexity over residues 1398 to 1409 (LSASSEESGSGS) and 1430 to 1443 (LSEG…SSLG).

The protein belongs to the AKAP110 family.

The protein resides in the cytoplasm. Anchoring protein that mediates the subcellular compartmentation of cAMP-dependent protein kinase (PKA type II). The chain is A-kinase anchor protein SPHKAP (sphkap) from Danio rerio (Zebrafish).